The following is a 257-amino-acid chain: Triosephosphate isomerase (257 aa).

Positions 11 and 13 each coordinate substrate. His96 serves as the catalytic Electrophile. The Proton acceptor role is filled by Glu170.

The protein belongs to the triosephosphate isomerase family. Homodimer.

It is found in the cytoplasm. It carries out the reaction D-glyceraldehyde 3-phosphate = dihydroxyacetone phosphate. The catalysed reaction is dihydroxyacetone phosphate = methylglyoxal + phosphate. The protein operates within carbohydrate biosynthesis; gluconeogenesis. It participates in carbohydrate degradation; glycolysis; D-glyceraldehyde 3-phosphate from glycerone phosphate: step 1/1. Triosephosphate isomerase is an extremely efficient metabolic enzyme that catalyzes the interconversion between dihydroxyacetone phosphate (DHAP) and D-glyceraldehyde-3-phosphate (G3P) in glycolysis and gluconeogenesis. Functionally, it is also responsible for the non-negligible production of methylglyoxal a reactive cytotoxic side-product that modifies and can alter proteins, DNA and lipids. This chain is Triosephosphate isomerase, found in Giardia intestinalis (Giardia lamblia).